Here is a 295-residue protein sequence, read N- to C-terminus: Alpha-1A adrenergic receptor (295 aa).

At 1–27 (MVFLSGNASDSSNCTHPPAPVNISKAI) the chain is on the extracellular side. Asn7, Asn13, and Asn22 each carry an N-linked (GlcNAc...) asparagine glycan. A helical transmembrane segment spans residues 28–51 (LLGVILGGLIIFGVLGNILVILSV). The Cytoplasmic portion of the chain corresponds to 52–64 (ACHRHLHSVTHYY). The chain crosses the membrane as a helical span at residues 65-88 (IVNLAVADLLLTSTVLPFSAIFEI). Residues 89 to 99 (LGYWAFGRVFC) are Extracellular-facing. Cys99 and Cys176 form a disulfide bridge. A helical transmembrane segment spans residues 100-122 (NIWAAVDVLCCTASIMGLCIISI). At 123 to 143 (DRYIGVSYPLRYPTIVTQKRG) the chain is on the cytoplasmic side. Residues 144–167 (LMALLCVWALSLVISIGPLFGWRQ) form a helical membrane-spanning segment. Over 168–181 (PAPEDETICQITEE) the chain is Extracellular. A helical transmembrane segment spans residues 182–205 (PGYVLFSALGSFYVPLTIILVMYC). Over 206-273 (RVYVVAKRES…FSREKKAAKT (68 aa)) the chain is Cytoplasmic. Position 215 is a phosphoserine; by PKA (Ser215). A helical transmembrane segment spans residues 274 to 295 (LGIVVGCFVLCWLPFFLVMPIG).

The protein belongs to the G-protein coupled receptor 1 family. Adrenergic receptor subfamily. ADRA1A sub-subfamily. Homo- and heterooligomer. Heterooligomerizes with ADRA1B homooligomers in cardiac myocytes. Interacts with CAVIN4.

It localises to the nucleus membrane. The protein resides in the cell membrane. Its subcellular location is the cytoplasm. The protein localises to the membrane. It is found in the caveola. Its function is as follows. This alpha-adrenergic receptor mediates its action by association with G proteins that activate a phosphatidylinositol-calcium second messenger system. Its effect is mediated by G(q) and G(11) proteins. Nuclear ADRA1A-ADRA1B heterooligomers regulate phenylephrine (PE)-stimulated ERK signaling in cardiac myocytes. The protein is Alpha-1A adrenergic receptor (ADRA1A) of Canis lupus familiaris (Dog).